The chain runs to 93 residues: RNA silencing suppressor (93 aa).

A basic region spans residues 44-47; sequence CKRR. The C4-type zinc finger occupies 54–69; the sequence is CWRCYRVYPPVCNSKC.

The protein belongs to the carlaviruses nucleic acid-binding protein family.

In terms of biological role, suppressor of viral-induced RNA silencing. The potential mechanism of action is based on sequestering siRNAs. In Solanum tuberosum (Potato), this protein is RNA silencing suppressor.